The following is a 229-amino-acid chain: Cytidylate kinase (229 aa).

12-20 (GPSGSGKGT) lines the ATP pocket.

The protein belongs to the cytidylate kinase family. Type 1 subfamily.

It localises to the cytoplasm. It carries out the reaction CMP + ATP = CDP + ADP. It catalyses the reaction dCMP + ATP = dCDP + ADP. This Pseudomonas fluorescens (strain Pf0-1) protein is Cytidylate kinase.